The chain runs to 397 residues: Cercosporin biosynthesis regulatory protein CTB8 (397 aa).

Residues 26 to 53 constitute a DNA-binding region (zn(2)-C6 fungal-type); sequence CTHCSSQKIRCTKERPACARCVNKGLLC. 2 disordered regions span residues 62–92 and 173–198; these read GTRR…DSVK and AEAS…ATTH. The segment covering 74 to 87 has biased composition (polar residues); sequence PETTISNAPTSSVP. A compositionally biased stretch (low complexity) spans 179 to 197; it reads PSSSSSPPSQRSDGGRATT.

The protein resides in the nucleus. In terms of biological role, transcription regulator of the gene cluster that mediates the biosynthesis of cercosporin, a light-activated, non-host-selective toxin. The perylenequinone chromophore of cercosporin absorbs light energy to attain an electronically-activated triplet state and produces active oxygen species such as the hydroxyl radical, superoxide, hydrogen peroxide or singlet oxygen upon reaction with oxygen molecules. These reactive oxygen species cause damage to various cellular components including lipids, proteins and nucleic acids. The chain is Cercosporin biosynthesis regulatory protein CTB8 from Cercospora nicotianae (Barn spot disease fungus).